The chain runs to 399 residues: Sperm equatorial segment protein 1 (399 aa).

Positions 1 to 18 (MKLVVLVALWLWPSSLLA) are cleaved as a signal peptide. Asparagine 128 is a glycosylation site (N-linked (GlcNAc...) asparagine). Positions 136–145 (EEPFIEKEPE) are enriched in basic and acidic residues. The tract at residues 136-250 (EEPFIEKEPE…PSAEDLPGRH (115 aa)) is disordered. Positions 157-167 (PEPELEPEPEP) are enriched in acidic residues. The segment covering 182 to 206 (VTSTTPNKELTGTSRISSMATQPAN) has biased composition (polar residues). The segment covering 207 to 225 (TQATRITVTVKTTSTMDVS) has biased composition (low complexity).

It belongs to the SPESP1 family. Post-translationally, glycosylated. In testis there are two predominant forms of 77- and 67-kDa and a form of 47-kDa, whereas in epididymal sperm from caput, corpus, and cauda there are two forms of 47- and 43-kDa. Testis forms contain complex carbohydrate residues. Epididymal sperm forms are N-glycosylated. Then undergoes significant glycosylation in the testis and that the majority of these glycoconjugates are removed by the time sperm reach the caput epididymis. In terms of tissue distribution, testis specific.

The protein localises to the cytoplasmic vesicle. The protein resides in the secretory vesicle. It localises to the acrosome. Its function is as follows. Involved in fertilization ability of sperm. The chain is Sperm equatorial segment protein 1 from Mus musculus (Mouse).